The following is a 383-amino-acid chain: tRNA (guanine-N(7)-)-methyltransferase non-catalytic subunit wuho (383 aa).

WD repeat units lie at residues 61 to 101 (NLEV…ALLL), 105 to 144 (ALAR…APPK), 148 to 187 (GHLS…DIHS), 191 to 231 (GHKE…EVLQ), and 289 to 329 (AGSW…QAES).

The protein belongs to the WD repeat TRM82 family. As to quaternary structure, forms a heterodimer with the catalytic subunit Mettl1. Interacts with mei-P26 and weakly interacts with bgcn; required for the function or formation of the mei-P26-bgcn-bam-sxl complex. Interacts with nanos; may be involved in mei-P26-dependent derepression of the BMP signaling pathway. Interacts with Myc; the interaction may be mediated by mei-P26 and may be involved in the regulation of ribosome biogenesis. In testis, it is present at high level in hub cells, a niche for germline stem cells of testis. Ubiquitously expressed in all testicular cells throughout spermatogenesis. Ubiquitously expressed in all germline and somatic cells of the ovary.

It is found in the nucleus. It localises to the cytoplasm. The protein operates within tRNA modification; N(7)-methylguanine-tRNA biosynthesis. Required for the Mettl1-dependent formation of N(7)-methylguanine at position 46 (m7G46) in tRNA. In the Mettl1-wuho methyltransferase complex, it is required to stabilize and induce conformational changes of the catalytic subunit. Required for binding of nanos mRNA and repression of translation by the mei-P26-bgcn-bam-sxl complex. May cooperate with mei-P26 and nanos to derepress the BMP signaling pathway. May cooperate with mei-P26 to suppress expression of a subset of microRNAs. May cooperate with mei-P26 to regulate bam expression levels in germline cells during gametogenesis. Required to promote mitosis to meiosis transition during gametogenesis. May regulate germline cell division in part by regulating ribosome biogenesis. The polypeptide is tRNA (guanine-N(7)-)-methyltransferase non-catalytic subunit wuho (Drosophila mojavensis (Fruit fly)).